The primary structure comprises 313 residues: Dihydroorotate dehydrogenase B (NAD(+)), catalytic subunit (313 aa).

Residues serine 21 and 45-46 (KA) contribute to the FMN site. Substrate contacts are provided by residues lysine 45 and 69-73 (NAIGL). Asparagine 99 and asparagine 127 together coordinate FMN. Asparagine 127 contributes to the substrate binding site. Cysteine 130 (nucleophile) is an active-site residue. Residues lysine 165 and isoleucine 191 each coordinate FMN. 192 to 193 (NT) is a substrate binding site. FMN is bound by residues glycine 217, 243-244 (GG), and 265-266 (GT).

It belongs to the dihydroorotate dehydrogenase family. Type 1 subfamily. In terms of assembly, heterotetramer of 2 PyrK and 2 PyrD type B subunits. FMN serves as cofactor.

Its subcellular location is the cytoplasm. The enzyme catalyses (S)-dihydroorotate + NAD(+) = orotate + NADH + H(+). Its pathway is pyrimidine metabolism; UMP biosynthesis via de novo pathway; orotate from (S)-dihydroorotate (NAD(+) route): step 1/1. Catalyzes the conversion of dihydroorotate to orotate with NAD(+) as electron acceptor. This is Dihydroorotate dehydrogenase B (NAD(+)), catalytic subunit (pyrD) from Geobacillus sp. (strain WCH70).